The chain runs to 327 residues: tRNA uridine(34) hydroxylase (327 aa).

The Rhodanese domain occupies 123–217; that stretch reads SDPEVLLVDT…YLEEVKQEES (95 aa). Cysteine 177 functions as the Cysteine persulfide intermediate in the catalytic mechanism.

This sequence belongs to the TrhO family.

It catalyses the reaction uridine(34) in tRNA + AH2 + O2 = 5-hydroxyuridine(34) in tRNA + A + H2O. Functionally, catalyzes oxygen-dependent 5-hydroxyuridine (ho5U) modification at position 34 in tRNAs. In Shewanella piezotolerans (strain WP3 / JCM 13877), this protein is tRNA uridine(34) hydroxylase.